The following is a 502-amino-acid chain: Glycerol kinase (502 aa).

An ADP-binding site is contributed by Thr13. Thr13, Thr14, and Ser15 together coordinate ATP. Thr13 provides a ligand contact to sn-glycerol 3-phosphate. Arg17 provides a ligand contact to ADP. The sn-glycerol 3-phosphate site is built by Arg83, Glu84, Tyr136, and Asp246. The glycerol site is built by Arg83, Glu84, Tyr136, Asp246, and Gln247. The ADP site is built by Thr268 and Gly311. Residues Thr268, Gly311, Gln315, and Gly412 each coordinate ATP. ADP-binding residues include Gly412 and Asn416.

The protein belongs to the FGGY kinase family.

It catalyses the reaction glycerol + ATP = sn-glycerol 3-phosphate + ADP + H(+). Its pathway is polyol metabolism; glycerol degradation via glycerol kinase pathway; sn-glycerol 3-phosphate from glycerol: step 1/1. Inhibited by fructose 1,6-bisphosphate (FBP). Key enzyme in the regulation of glycerol uptake and metabolism. Catalyzes the phosphorylation of glycerol to yield sn-glycerol 3-phosphate. This Francisella tularensis subsp. tularensis (strain FSC 198) protein is Glycerol kinase.